We begin with the raw amino-acid sequence, 149 residues long: 3-dehydroquinate dehydratase (149 aa).

Tyr26 functions as the Proton acceptor in the catalytic mechanism. Substrate-binding residues include Asn75, His81, and Asp88. The Proton donor role is filled by His101. Substrate-binding positions include 102–103 (LS) and Arg112.

The protein belongs to the type-II 3-dehydroquinase family. In terms of assembly, homododecamer.

It carries out the reaction 3-dehydroquinate = 3-dehydroshikimate + H2O. It functions in the pathway metabolic intermediate biosynthesis; chorismate biosynthesis; chorismate from D-erythrose 4-phosphate and phosphoenolpyruvate: step 3/7. Its function is as follows. Catalyzes a trans-dehydration via an enolate intermediate. The polypeptide is 3-dehydroquinate dehydratase (Shewanella woodyi (strain ATCC 51908 / MS32)).